Here is an 83-residue protein sequence, read N- to C-terminus: Hepcidin (83 aa).

An N-terminal signal peptide occupies residues 1–23; sequence MALSTRTQAACLLLLLLASLSST. The propeptide occupies 24–53; sequence TYLHQQMRQTTELQPLHGEESRADIAIPMQ. Cystine bridges form between cysteine 65–cysteine 81, cysteine 68–cysteine 71, cysteine 69–cysteine 77, and cysteine 72–cysteine 80.

It belongs to the hepcidin family. In terms of assembly, interacts with SLC40A1; this interaction promotes SLC40A1 rapid ubiquitination. Highly expressed in the liver and to a much lesser extent in the heart. Secreted in blood.

It is found in the secreted. Its function is as follows. Liver-produced hormone that constitutes the main circulating regulator of iron absorption and distribution across tissues. Acts by promoting endocytosis and degradation of SLC40A1, leading to the retention of iron in iron-exporting cells and decreased flow of iron into plasma. Controls the major flows of iron into plasma: absorption of dietary iron in the intestine, recycling of iron by macrophages, which phagocytose old erythrocytes and other cells, and mobilization of stored iron from hepatocytes. This Mus musculus (Mouse) protein is Hepcidin (Hamp).